Here is a 429-residue protein sequence, read N- to C-terminus: Histidine--tRNA ligase (429 aa).

The protein belongs to the class-II aminoacyl-tRNA synthetase family. Homodimer.

It is found in the cytoplasm. It catalyses the reaction tRNA(His) + L-histidine + ATP = L-histidyl-tRNA(His) + AMP + diphosphate + H(+). In Streptococcus pneumoniae (strain CGSP14), this protein is Histidine--tRNA ligase.